The primary structure comprises 481 residues: Bifunctional protein HldE (481 aa).

The tract at residues 1 to 318 (MKVTLPDFRR…ENAIRGRAET (318 aa)) is ribokinase. 195–198 (NLSE) serves as a coordination point for ATP. The active site involves Asp-264. The tract at residues 344–481 (MTNGIFDILH…KRRAGQRTVV (138 aa)) is cytidylyltransferase.

In the N-terminal section; belongs to the carbohydrate kinase PfkB family. It in the C-terminal section; belongs to the cytidylyltransferase family. Homodimer.

It carries out the reaction D-glycero-beta-D-manno-heptose 7-phosphate + ATP = D-glycero-beta-D-manno-heptose 1,7-bisphosphate + ADP + H(+). It catalyses the reaction D-glycero-beta-D-manno-heptose 1-phosphate + ATP + H(+) = ADP-D-glycero-beta-D-manno-heptose + diphosphate. Its pathway is nucleotide-sugar biosynthesis; ADP-L-glycero-beta-D-manno-heptose biosynthesis; ADP-L-glycero-beta-D-manno-heptose from D-glycero-beta-D-manno-heptose 7-phosphate: step 1/4. The protein operates within nucleotide-sugar biosynthesis; ADP-L-glycero-beta-D-manno-heptose biosynthesis; ADP-L-glycero-beta-D-manno-heptose from D-glycero-beta-D-manno-heptose 7-phosphate: step 3/4. In terms of biological role, catalyzes the phosphorylation of D-glycero-D-manno-heptose 7-phosphate at the C-1 position to selectively form D-glycero-beta-D-manno-heptose-1,7-bisphosphate. Catalyzes the ADP transfer from ATP to D-glycero-beta-D-manno-heptose 1-phosphate, yielding ADP-D-glycero-beta-D-manno-heptose. In Sodalis glossinidius (strain morsitans), this protein is Bifunctional protein HldE.